The following is a 78-amino-acid chain: Large ribosomal subunit protein eL20 (78 aa).

Belongs to the eukaryotic ribosomal protein eL20 family. In terms of assembly, part of the 50S ribosomal subunit. Binds 23S rRNA.

The protein is Large ribosomal subunit protein eL20 of Thermococcus sibiricus (strain DSM 12597 / MM 739).